The sequence spans 39 residues: uncharacterized protein (39 aa).

An N-terminal signal peptide occupies residues methionine 1–serine 21.

This is an uncharacterized protein from Saccharomyces cerevisiae (strain ATCC 204508 / S288c) (Baker's yeast).